The sequence spans 1624 residues: Pappalysin-1 (1624 aa).

The N-terminal stretch at 1–22 (MRLWSWVLRLGLLSAALGCGLA) is a signal peptide. A propeptide spanning residues 23–81 (ERPRRVRRDPRAVRPPRPAAGPATCATRAARGRRASPPPPPGGAWEAVRVPRRRQQRAA) is cleaved from the precursor. Residues 28 to 93 (VRRDPRAVRP…AEEPSPPSRA (66 aa)) are disordered. A compositionally biased stretch (low complexity) spans 42 to 51 (AGPATCATRA). Intrachain disulfides connect Cys-141/Cys-232, Cys-324/Cys-619, Cys-329/Cys-654, Cys-411/Cys-425, Cys-421/Cys-437, Cys-454/Cys-470, Cys-471/Cys-482, Cys-580/Cys-597, Cys-584/Cys-609, Cys-707/Cys-875, Cys-710/Cys-878, Cys-750/Cys-832, Cys-772/Cys-778, Cys-944/Cys-972, Cys-957/Cys-968, Cys-980/Cys-987, and Cys-996/Cys-1008. The interval 272-583 (RGLHTPLPQL…ISEIQSCSDP (312 aa)) is metalloprotease. N-linked (GlcNAc...) asparagine glycosylation is found at Asn-387 and Asn-398. The N-linked (GlcNAc...) asparagine glycan is linked to Asn-426. N-linked (GlcNAc...) asparagine glycosylation occurs at Asn-516. His-559 is a Zn(2+) binding site. The active site involves Glu-560. His-563 and His-569 together coordinate Zn(2+). Asn-598, Asn-616, and Asn-722 each carry an N-linked (GlcNAc...) asparagine glycan. Asn-822 carries an N-linked (GlcNAc...) asparagine glycan. Asn-1023 carries an N-linked (GlcNAc...) asparagine glycan. Cystine bridges form between Cys-1033–Cys-1067, Cys-1048–Cys-1136, Cys-1189–Cys-1202, Cys-1212–Cys-1266, Cys-1224–Cys-1235, Cys-1239–Cys-1277, Cys-1282–Cys-1326, Cys-1297–Cys-1307, Cys-1311–Cys-1339, Cys-1343–Cys-1396, Cys-1359–Cys-1370, Cys-1374–Cys-1407, Cys-1412–Cys-1455, Cys-1425–Cys-1435, Cys-1439–Cys-1468, Cys-1475–Cys-1536, Cys-1489–Cys-1499, Cys-1503–Cys-1551, and Cys-1555–Cys-1573. Sushi domains follow at residues 1210 to 1279 (ADCP…ACEP), 1280 to 1341 (VDCG…LCEL), 1342 to 1409 (MCLA…TCVP), 1410 to 1470 (VTCD…VCRE), and 1473 to 1553 (GQCS…HCVK). N-linked (GlcNAc...) asparagine glycosylation is found at Asn-1219 and Asn-1223. The N-linked (GlcNAc...) asparagine glycan is linked to Asn-1320. N-linked (GlcNAc...) asparagine glycosylation is present at Asn-1516.

Belongs to the peptidase M43B family. In terms of assembly, homodimer; disulfide-linked. In pregnancy serum, predominantly found as a disulfide-linked 2:2 heterotetramer with the proform of PRG2. Zn(2+) is required as a cofactor. In terms of tissue distribution, detected in kidney, spleen, brain, ovary, breast, skin, prostate, uterus, and placenta.

The protein resides in the secreted. The enzyme catalyses Cleavage of the 135-Met-|-Lys-136 bond in insulin-like growth factor binding protein (IGFBP)-4, and the 143-Ser-|-Lys-144 bond in IGFBP-5.. In terms of biological role, metalloproteinase which specifically cleaves IGFBP-4 and IGFBP-5, resulting in release of bound IGF. Cleavage of IGFBP-4 is dramatically enhanced by the presence of IGF, whereas cleavage of IGFBP-5 is slightly inhibited by the presence of IGF. Isoform 2 cleaves IGFBP-4 very slowly compared to PAPP-A, but its ability to cleave IGFBP-5 is unaffected. The sequence is that of Pappalysin-1 (Pappa) from Mus musculus (Mouse).